We begin with the raw amino-acid sequence, 487 residues long: NADH-quinone oxidoreductase subunit N (487 aa).

A run of 14 helical transmembrane segments spans residues 8-28, 35-55, 78-98, 104-124, 125-145, 159-179, 203-223, 235-255, 271-291, 297-317, 328-348, 376-396, 409-428, and 451-471; these read LIAM…MLSI, FINA…LYFV, GLVI…LVGY, EFYL…SANH, LASL…LIGY, YMLL…LLYA, ILAG…LVPF, PAPV…AVVM, LVLS…AISQ, LLGY…VAVQ, IGVY…VVSL, AVMT…GFIG, LWWL…YYYL, and ALTA…VLGI.

The protein belongs to the complex I subunit 2 family. As to quaternary structure, NDH-1 is composed of 13 different subunits. Subunits NuoA, H, J, K, L, M, N constitute the membrane sector of the complex.

Its subcellular location is the cell inner membrane. The enzyme catalyses a quinone + NADH + 5 H(+)(in) = a quinol + NAD(+) + 4 H(+)(out). NDH-1 shuttles electrons from NADH, via FMN and iron-sulfur (Fe-S) centers, to quinones in the respiratory chain. The immediate electron acceptor for the enzyme in this species is believed to be ubiquinone. Couples the redox reaction to proton translocation (for every two electrons transferred, four hydrogen ions are translocated across the cytoplasmic membrane), and thus conserves the redox energy in a proton gradient. The chain is NADH-quinone oxidoreductase subunit N from Yersinia pestis bv. Antiqua (strain Angola).